The primary structure comprises 91 residues: CRISPR-associated endoribonuclease Cas2 2 (91 aa).

Asp10 serves as a coordination point for Mg(2+).

This sequence belongs to the CRISPR-associated endoribonuclease Cas2 protein family. As to quaternary structure, homodimer, forms a heterotetramer with a Cas1 homodimer. Mg(2+) is required as a cofactor.

CRISPR (clustered regularly interspaced short palindromic repeat), is an adaptive immune system that provides protection against mobile genetic elements (viruses, transposable elements and conjugative plasmids). CRISPR clusters contain sequences complementary to antecedent mobile elements and target invading nucleic acids. CRISPR clusters are transcribed and processed into CRISPR RNA (crRNA). Functions as a ssRNA-specific endoribonuclease. Involved in the integration of spacer DNA into the CRISPR cassette. The chain is CRISPR-associated endoribonuclease Cas2 2 from Thermodesulfovibrio yellowstonii (strain ATCC 51303 / DSM 11347 / YP87).